Reading from the N-terminus, the 281-residue chain is Putative phosphatase/phosphodiesterase MG246 (281 aa).

Residues D11, E42, N43, and N70 each coordinate Fe cation. H71 (proton donor) is an active-site residue. Fe cation-binding residues include H157, H182, and H184.

It belongs to the YmdB-like family. Requires Fe(3+) as cofactor.

The chain is Putative phosphatase/phosphodiesterase MG246 from Mycoplasma genitalium (strain ATCC 33530 / DSM 19775 / NCTC 10195 / G37) (Mycoplasmoides genitalium).